We begin with the raw amino-acid sequence, 268 residues long: Regulatory protein zeste (268 aa).

A DNA-binding region spans residues 1–72 (TAEEKEVLYT…WLNSRLRKQY (72 aa)). The span at 94 to 108 (VSVASAVPQQQQQQH) shows a compositional bias: low complexity. The tract at residues 94–133 (VSVASAVPQQQQQQHHQQHDNVKEEPEYQISPDASEHNPQ) is disordered. Residues 110-119 (QQHDNVKEEP) show a composition bias toward basic and acidic residues.

As to quaternary structure, self-associates forming complexes of several hundred monomers.

The protein localises to the nucleus. Involved in transvection phenomena (= synapsis-dependent gene expression), where the synaptic pairing of chromosomes carrying genes with which zeste interacts influences the expression of these genes. Zeste binds to DNA and stimulates transcription from a nearby promoter. This is Regulatory protein zeste (z) from Drosophila sechellia (Fruit fly).